A 422-amino-acid chain; its full sequence is Chorismate synthase (422 aa).

The NADP(+) site is built by Arg43 and Arg49. FMN is bound by residues Arg143 to Ser145, Gln264 to Ala265, Gly309, Lys324 to Thr328, and Arg350.

The protein belongs to the chorismate synthase family. In terms of assembly, homotetramer. FMNH2 serves as cofactor.

The enzyme catalyses 5-O-(1-carboxyvinyl)-3-phosphoshikimate = chorismate + phosphate. It participates in metabolic intermediate biosynthesis; chorismate biosynthesis; chorismate from D-erythrose 4-phosphate and phosphoenolpyruvate: step 7/7. In terms of biological role, catalyzes the anti-1,4-elimination of the C-3 phosphate and the C-6 proR hydrogen from 5-enolpyruvylshikimate-3-phosphate (EPSP) to yield chorismate, which is the branch point compound that serves as the starting substrate for the three terminal pathways of aromatic amino acid biosynthesis. This reaction introduces a second double bond into the aromatic ring system. This is Chorismate synthase from Corynebacterium jeikeium (strain K411).